The sequence spans 712 residues: Follistatin-like domain-containing protein DDB_G0289517 (712 aa).

A signal peptide spans 1-21 (MKIQTIIQIVLISFLFLNVES). Asn-102 is a glycosylation site (N-linked (GlcNAc...) asparagine). The interval 181–400 (DIYNHLNPDS…SSSPVHQDPC (220 aa)) is disordered. A compositionally biased stretch (basic and acidic residues) spans 192–203 (QFKDKPNHENHK). Residues 204-214 (KDKNNKKHKKD) show a composition bias toward basic residues. Asn-217 and Asn-234 each carry an N-linked (GlcNAc...) asparagine glycan. The span at 220-251 (DKNNNNNNNNNNKKNKTINNNEPNQNQQSNPI) shows a compositional bias: low complexity. Polar residues predominate over residues 254–269 (TFNNETPFPWNFKNQD). Residues 270–281 (QQQQKQEQTQKQ) show a composition bias toward low complexity. A compositionally biased stretch (polar residues) spans 301–321 (KEPTTHLNTIEPTSFTASASR). Residues 330 to 339 (KDEENIDENN) are compositionally biased toward acidic residues. Residues 352 to 364 (DDKSKKPKDDEKH) show a composition bias toward basic and acidic residues. N-linked (GlcNAc...) asparagine glycosylation occurs at Asn-369. The segment covering 374 to 384 (PADDPSIEITE) has biased composition (acidic residues). A compositionally biased stretch (polar residues) spans 386-395 (PTITPSSSPV). Follistatin-like domains lie at 399-421 (PCKK…AYCK) and 471-494 (TCST…PYCQ). Asn-407 carries N-linked (GlcNAc...) asparagine glycosylation. Residues Asn-505, Asn-524, and Asn-566 are each glycosylated (N-linked (GlcNAc...) asparagine). In terms of domain architecture, Follistatin-like 3 spans 596–618 (SCETLLCEGVNSYCVENGGPICK). Asn-622 is a glycosylation site (N-linked (GlcNAc...) asparagine). 2 consecutive Follistatin-like domains span residues 660 to 682 (SCSV…PKCY) and 687 to 710 (ECSN…GACL).

Its subcellular location is the secreted. The polypeptide is Follistatin-like domain-containing protein DDB_G0289517 (Dictyostelium discoideum (Social amoeba)).